The primary structure comprises 153 residues: Lipoprotein signal peptidase (153 aa).

3 consecutive transmembrane segments (helical) span residues 11–31, 39–59, and 68–88; these read ILIL…SLFV, DCID…FAFL, and LVLV…CYAI. Active-site residues include aspartate 112 and aspartate 129. The helical transmembrane segment at 122-142 threads the bilayer; sequence FAVFNFADVMIDVAVVWILLL.

The protein belongs to the peptidase A8 family.

Its subcellular location is the cell inner membrane. The enzyme catalyses Release of signal peptides from bacterial membrane prolipoproteins. Hydrolyzes -Xaa-Yaa-Zaa-|-(S,diacylglyceryl)Cys-, in which Xaa is hydrophobic (preferably Leu), and Yaa (Ala or Ser) and Zaa (Gly or Ala) have small, neutral side chains.. Its pathway is protein modification; lipoprotein biosynthesis (signal peptide cleavage). Its function is as follows. This protein specifically catalyzes the removal of signal peptides from prolipoproteins. The chain is Lipoprotein signal peptidase from Sulfurimonas denitrificans (strain ATCC 33889 / DSM 1251) (Thiomicrospira denitrificans (strain ATCC 33889 / DSM 1251)).